The primary structure comprises 478 residues: MVQGKVLVVSNRIPVTIKRLDNGSYDYSMSSGGLVTALQGLKKTTEFQWYGWPGLEIPEDEQTKVNDELKSKFNCTAIFLSDTIADLHYNGFSNSILWPLFHYHPGEMNFDENAWAAYIEANKKFALEIVKQVNDDDMIWVHDYHLMLLPEMLRQEIGNKKKNIKIGFFLHTPFPSSEIYRILPVRKEILEGVLSCDLIGFHTYDYARHFISSVSRIVPNVSTLPNGIKYQGRSISIGAFPIGIDVDNFIDGLKKDSVVERIKQLKSKFKDVKVIVGVDRLDYIKGVPQKLHAFEVFLNENPEWIGKVVLVQVAVPSRGDVEEYQSLRSTVSELVGRINGEFGTVEFVPIHYLHKSIPFDELISLYNISDVCLVSSTRDGMNLVSYEYIACQQDRKGVLILSEFAGAAQSLNGALIVNPWNTEDLSEAIKESLTLPEEKREFNFKKLFTYISKYTSGFWGESFVKELYKCNPQKSLRD.

D-glucose 6-phosphate contacts are provided by Tyr-89 and Asp-143. Residues Arg-280 and Lys-285 each coordinate UDP. Arg-280 and Lys-285 together coordinate UDP-alpha-D-glucose. Arg-318 is a D-glucose 6-phosphate binding site. UDP-binding positions include Ile-357 and 383-387 (LVSYE). UDP-alpha-D-glucose is bound by residues Ile-357 and 379-387 (DGMNLVSYE).

This sequence belongs to the glycosyltransferase 20 family.

It carries out the reaction D-glucose 6-phosphate + UDP-alpha-D-glucose = alpha,alpha-trehalose 6-phosphate + UDP + H(+). Its pathway is carbohydrate biosynthesis. Its activity is regulated as follows. Inhibited by validoxylamine A, a non-reactive trehalose analog. Synthase catalytic subunit of the trehalose synthase complex that catalyzes the production of trehalose from glucose-6-phosphate and UDP-alpha-D-glucose in a two step process. The polypeptide is Alpha,alpha-trehalose-phosphate synthase [UDP-forming] (Candida albicans (strain SC5314 / ATCC MYA-2876) (Yeast)).